The following is a 731-amino-acid chain: Catalase-peroxidase (731 aa).

Positions Met1 to Asn23 are disordered. A cross-link (tryptophyl-tyrosyl-methioninium (Trp-Tyr) (with M-244)) is located at residues Trp95–Tyr218. The active-site Proton acceptor is His96. Positions Tyr218 to Met244 form a cross-link, tryptophyl-tyrosyl-methioninium (Tyr-Met) (with W-95). His259 lines the heme b pocket.

The protein belongs to the peroxidase family. Peroxidase/catalase subfamily. As to quaternary structure, homodimer or homotetramer. The cofactor is heme b. Formation of the three residue Trp-Tyr-Met cross-link is important for the catalase, but not the peroxidase activity of the enzyme.

It catalyses the reaction H2O2 + AH2 = A + 2 H2O. The enzyme catalyses 2 H2O2 = O2 + 2 H2O. Functionally, bifunctional enzyme with both catalase and broad-spectrum peroxidase activity. The sequence is that of Catalase-peroxidase from Synechococcus sp. (strain WH7803).